A 66-amino-acid chain; its full sequence is Large ribosomal subunit protein bL35 (66 aa).

Positions 1 to 16 (MPKQKTHRASAKRFKR) are enriched in basic residues. The tract at residues 1–22 (MPKQKTHRASAKRFKRTGSGGL) is disordered.

It belongs to the bacterial ribosomal protein bL35 family.

The polypeptide is Large ribosomal subunit protein bL35 (Streptococcus suis (strain 05ZYH33)).